Here is a 192-residue protein sequence, read N- to C-terminus: Large ribosomal subunit protein bL25 (192 aa).

It belongs to the bacterial ribosomal protein bL25 family. CTC subfamily. Part of the 50S ribosomal subunit; part of the 5S rRNA/L5/L18/L25 subcomplex. Contacts the 5S rRNA. Binds to the 5S rRNA independently of L5 and L18.

This is one of the proteins that binds to the 5S RNA in the ribosome where it forms part of the central protuberance. The chain is Large ribosomal subunit protein bL25 from Porphyromonas gingivalis (strain ATCC 33277 / DSM 20709 / CIP 103683 / JCM 12257 / NCTC 11834 / 2561).